Consider the following 218-residue polypeptide: Small ribosomal subunit protein uS5 (218 aa).

Residues 1–49 (MPGRQRRDGGSGPAGQNGPNTGDNRGGGDRRGGGRDDRRGGQSAEKSNH) are disordered. The segment covering 26–49 (GGGDRRGGGRDDRRGGQSAEKSNH) has biased composition (basic and acidic residues). In terms of domain architecture, S5 DRBM spans 49–112 (HIERVVTINR…EEARKSFFRV (64 aa)).

Belongs to the universal ribosomal protein uS5 family. In terms of assembly, part of the 30S ribosomal subunit. Contacts proteins S4 and S8.

Functionally, with S4 and S12 plays an important role in translational accuracy. Its function is as follows. Located at the back of the 30S subunit body where it stabilizes the conformation of the head with respect to the body. The polypeptide is Small ribosomal subunit protein uS5 (Rhodococcus jostii (strain RHA1)).